A 76-amino-acid polypeptide reads, in one-letter code: Waprin-Rha1 (76 aa).

The N-terminal stretch at 1–24 (MQARVFLLLLGVILLGMMGPMVSA) is a signal peptide. The WAP domain occupies 25 to 75 (QDGKAGSCPDVNQPIPPLGVCKTTCATDSNCPDIQKCCKNGCGHMSCTRPS). Cystine bridges form between Cys-32/Cys-62, Cys-45/Cys-66, Cys-49/Cys-61, and Cys-55/Cys-71.

The protein belongs to the venom waprin family. In terms of tissue distribution, expressed by the venom gland.

It localises to the secreted. Its function is as follows. Damages membranes of susceptible bacteria. Has no hemolytic activity. Not toxic to mice. Does not inhibit the proteinases elastase and cathepsin G. In Rhabdophis tigrinus tigrinus (Tiger keelback snake), this protein is Waprin-Rha1.